Consider the following 580-residue polypeptide: Trafficking protein particle complex subunit 14 (580 aa).

Disordered regions lie at residues 90–138 (GMPG…ATTL) and 480–533 (VSHP…RSGS). Residues 105 to 116 (PGGGDPGGGGLF) are compositionally biased toward gly residues. Residues 124–137 (THGPGPATSGGATT) are compositionally biased toward low complexity. Ser491 is modified (phosphoserine). Residues 492–502 (RKSSPSSPAVR) are compositionally biased toward low complexity. The span at 512-525 (LGRSQSFSHQQPSR) shows a compositional bias: polar residues. Ser517 bears the Phosphoserine mark. Thr541 is modified (phosphothreonine). Ser546 carries the phosphoserine modification.

In terms of assembly, component of the multisubunit TRAPP II complex, which includes at least TRAPPC1, TRAPPC2, TRAPPC2L, TRAPPC3, TRAPPC4, TRAPPC5, TRAPPC6A/B, TRAPPC9, TRAPPC10 and TRAPPC14. TRAPPC9, TRAPPC10 and TRAPPC14 are specific subunits of the TRAPP II complex. Interacts with alpha-tubulin during mitosis. Interacts with RAB3IP (via the N-terminal region); this interaction mediates RAB3IP association with the TRAPP II complex. Interacts with TRAPPC10. Interacts with FBF1. In terms of tissue distribution, broadly expressed. High levels in brain, cerebellum, testis and whole blood.

The protein localises to the cytoplasm. It localises to the cytoskeleton. The protein resides in the spindle. Its subcellular location is the vesicle. It is found in the midbody. In terms of biological role, specific subunit of the TRAPP (transport protein particle) II complex, a highly conserved vesicle tethering complex that functions in late Golgi trafficking as a membrane tether. TRAPP II complex also has GEF activity toward RAB1A. TRAPPC14 is dispensable for TRAPPII complex integrity but mediates RAB3IP preciliary vesicle trafficking to the mother centriole during ciliogenesis. Modulates YAP1 activity as transcriptional regulator. This Homo sapiens (Human) protein is Trafficking protein particle complex subunit 14.